Consider the following 349-residue polypeptide: Phosphoribosylformylglycinamidine cyclo-ligase (349 aa).

Belongs to the AIR synthase family.

Its subcellular location is the cytoplasm. The catalysed reaction is 2-formamido-N(1)-(5-O-phospho-beta-D-ribosyl)acetamidine + ATP = 5-amino-1-(5-phospho-beta-D-ribosyl)imidazole + ADP + phosphate + H(+). Its pathway is purine metabolism; IMP biosynthesis via de novo pathway; 5-amino-1-(5-phospho-D-ribosyl)imidazole from N(2)-formyl-N(1)-(5-phospho-D-ribosyl)glycinamide: step 2/2. This is Phosphoribosylformylglycinamidine cyclo-ligase from Listeria monocytogenes serovar 1/2a (strain ATCC BAA-679 / EGD-e).